Here is a 785-residue protein sequence, read N- to C-terminus: 1-phosphatidylinositol 4,5-bisphosphate phosphodiesterase delta-3 (785 aa).

The interval 1–43 (MLCGGWKRSRRSPEESRVSAQVAAPLAFPPSPASSDSSTKRPG) is disordered. The 104-residue stretch at 65-168 (SRLLKIRSRT…WVRGLAKLRA (104 aa)) folds into the PH domain. A substrate binding region spans residues 69-97 (KIRSRTWHKERLYRLQEDGLSVWFQRRIP). Residue S101 is modified to Phosphoserine. 3 consecutive EF-hand domains span residues 178–213 (RLDH…VNVD), 214–249 (MNDM…LLKR), and 246–281 (LLKR…QGED). Ca(2+) is bound by residues D191, D193, D195, K197, E202, D227, S229, N231, R233, and E238. The PI-PLC X-box domain maps to 333–478 (QDMGQPLAHY…LKGRILVKGK (146 aa)). Residue H348 is part of the active site. Residues N349, E378, and D380 each coordinate Ca(2+). Residue H393 is part of the active site. A Ca(2+)-binding site is contributed by E427. The substrate site is built by K476 and K478. Residues 484 to 493 (RSEDGRILSD) show a composition bias toward basic and acidic residues. The interval 484-517 (RSEDGRILSDREEEEEEEEEAEEALEAAEQRSRA) is disordered. S492 is subject to Phosphoserine. Acidic residues predominate over residues 494–509 (REEEEEEEEEAEEALE). The PI-PLC Y-box domain maps to 524–640 (LSALAVYCCA…GYVLKPAYLR (117 aa)). Position 553 (S553) interacts with substrate. S569 is subject to Phosphoserine. R580 is a substrate binding site. Positions 636 to 765 (PAYLRQLNTT…QGYRHIHLLS (130 aa)) constitute a C2 domain. The Ca(2+) site is built by I679, D681, N705, D734, Y735, and D736.

Ca(2+) serves as cofactor. As to expression, expressed in cerebellum and cerebral cortex.

The protein resides in the membrane. Its subcellular location is the cytoplasm. The protein localises to the cleavage furrow. The enzyme catalyses a 1,2-diacyl-sn-glycero-3-phospho-(1D-myo-inositol-4,5-bisphosphate) + H2O = 1D-myo-inositol 1,4,5-trisphosphate + a 1,2-diacyl-sn-glycerol + H(+). Its activity is regulated as follows. Strongly activated by phosphatidic acid. Inhibited by phosphatidylethanolamine (PtdEtn), phosphatidylcholine (PtdCho), sphingomyelin and phosphatidylserine (PtdSer). In terms of biological role, hydrolyzes the phosphatidylinositol 4,5-bisphosphate (PIP2) to generate 2 second messenger molecules diacylglycerol (DAG) and inositol 1,4,5-trisphosphate (IP3). DAG mediates the activation of protein kinase C (PKC), while IP3 releases Ca(2+) from intracellular stores. Essential for trophoblast and placental development. May participate in cytokinesis by hydrolyzing PIP2 at the cleavage furrow. Regulates neurite outgrowth through the inhibition of RhoA/Rho kinase signaling. The polypeptide is 1-phosphatidylinositol 4,5-bisphosphate phosphodiesterase delta-3 (Mus musculus (Mouse)).